A 452-amino-acid polypeptide reads, in one-letter code: Probable intron-encoded endonuclease 2 (452 aa).

A run of 3 helical transmembrane segments spans residues 1–21 (MNIT…NRKN), 22–42 (IILM…LILV), and 57–77 (IYII…LVAF). The segment at 1–80 (MNITLILFLI…LAILVAFYRL (80 aa)) is ndh-4L exon 1 encoded. Residues 81–452 (INSPVKNPRS…SLEGGMNKNI (372 aa)) form a ndh-4L intron 1 encoded region.

In the N-terminal section; belongs to the complex I subunit 4L family. It in the C-terminal section; belongs to the LAGLIDADG endonuclease family.

It is found in the mitochondrion membrane. Functionally, mitochondrial DNA endonuclease involved in intron homing. This chain is Probable intron-encoded endonuclease 2, found in Neurospora crassa (strain ATCC 24698 / 74-OR23-1A / CBS 708.71 / DSM 1257 / FGSC 987).